The following is a 227-amino-acid chain: (S)-2-haloacid dehalogenase (227 aa).

Aspartate 10 (nucleophile) is an active-site residue. Residues 11-12 (LY), arginine 41, and 118-119 (SN) each bind an (S)-2-haloacid. The tract at residues 175–180 (SSNAWD) is important for catalytic activity.

Belongs to the HAD-like hydrolase superfamily. S-2-haloalkanoic acid dehalogenase family. Homotetramer.

It carries out the reaction an (S)-2-haloacid + H2O = a (2R)-2-hydroxycarboxylate + a halide anion + H(+). It catalyses the reaction (S)-2-chloropropanoate + H2O = (R)-lactate + chloride + H(+). In terms of biological role, catalyzes the hydrolytic dehalogenation of small (S)-2-haloalkanoic acids to yield the corresponding (R)-2-hydroxyalkanoic acids. Acts on acids of short chain lengths, C(2) to C(4), with inversion of configuration at C-2. Active with 2-halogenated carboxylic acids and converts only the S-isomer (or L-isomer) of 2-chloropropionic acid with inversion of configuration to produce R-lactate (or D-isomer). This is (S)-2-haloacid dehalogenase from Pseudomonas putida (Arthrobacter siderocapsulatus).